A 57-amino-acid chain; its full sequence is Small hydrophobic protein (57 aa).

Residues 1-8 (MPAIQPPL) lie on the Virion surface side of the membrane. A helical membrane pass occupies residues 9–29 (YLTFLLLILLYRIITLYVWVV). Residues 30–57 (STITYKTAVRHAALYQRSLFRWSFDHSL) are Intravirion-facing.

It belongs to the rubulavirus small hydrophobic protein family. Interacts with host TNFRSF1A, RIPK1 and IRAK1; these interactions interfere with host NF-kappa-B activation at the level of receptor complexes. Interacts with host protein UBQLN4.

The protein resides in the virion membrane. The protein localises to the host cell membrane. Plays a role in the inhibition of the host NF-kappa-B pathway. This inhibition occurs at the receptor level, by preventing the signaling of TNFR1 as well as IL-1R and TLR3. The protein is Small hydrophobic protein (SH) of Mumps virus (strain Belfast) (MuV).